Reading from the N-terminus, the 529-residue chain is Bifunctional purine biosynthesis protein PurH (529 aa).

The region spanning 8–158 (PSAPDLVAPK…KNHGYVAVCT (151 aa)) is the MGS-like domain.

The protein belongs to the PurH family.

The enzyme catalyses (6R)-10-formyltetrahydrofolate + 5-amino-1-(5-phospho-beta-D-ribosyl)imidazole-4-carboxamide = 5-formamido-1-(5-phospho-D-ribosyl)imidazole-4-carboxamide + (6S)-5,6,7,8-tetrahydrofolate. It catalyses the reaction IMP + H2O = 5-formamido-1-(5-phospho-D-ribosyl)imidazole-4-carboxamide. It participates in purine metabolism; IMP biosynthesis via de novo pathway; 5-formamido-1-(5-phospho-D-ribosyl)imidazole-4-carboxamide from 5-amino-1-(5-phospho-D-ribosyl)imidazole-4-carboxamide (10-formyl THF route): step 1/1. It functions in the pathway purine metabolism; IMP biosynthesis via de novo pathway; IMP from 5-formamido-1-(5-phospho-D-ribosyl)imidazole-4-carboxamide: step 1/1. The polypeptide is Bifunctional purine biosynthesis protein PurH (Caulobacter vibrioides (strain ATCC 19089 / CIP 103742 / CB 15) (Caulobacter crescentus)).